The sequence spans 213 residues: Thymidylate kinase (213 aa).

An ATP-binding site is contributed by 11-18 (GGEGAGKT).

It belongs to the thymidylate kinase family.

It catalyses the reaction dTMP + ATP = dTDP + ADP. In terms of biological role, phosphorylation of dTMP to form dTDP in both de novo and salvage pathways of dTTP synthesis. The polypeptide is Thymidylate kinase (Shouchella clausii (strain KSM-K16) (Alkalihalobacillus clausii)).